Consider the following 157-residue polypeptide: Large ribosomal subunit protein uL22 (157 aa).

It belongs to the universal ribosomal protein uL22 family. As to quaternary structure, part of the 50S ribosomal subunit.

Its function is as follows. This protein binds specifically to 23S rRNA. It makes multiple contacts with different domains of the 23S rRNA in the assembled 50S subunit and ribosome. The globular domain of the protein is located near the polypeptide exit tunnel on the outside of the subunit, while an extended beta-hairpin is found that lines the wall of the exit tunnel in the center of the 70S ribosome. This Methanocorpusculum labreanum (strain ATCC 43576 / DSM 4855 / Z) protein is Large ribosomal subunit protein uL22.